The primary structure comprises 108 residues: Small ribosomal subunit protein eS25A (108 aa).

Residues 1–20 show a composition bias toward low complexity; that stretch reads MPPKQQLSKAAKAAAALAGG. A disordered region spans residues 1–30; sequence MPPKQQLSKAAKAAAALAGGKKSKKKWSKK. P2 is modified (n,N-dimethylproline; by NTM1). Residues 21–30 show a composition bias toward basic residues; the sequence is KKSKKKWSKK.

Belongs to the eukaryotic ribosomal protein eS25 family. In terms of assembly, component of the small ribosomal subunit (SSU). Mature yeast ribosomes consist of a small (40S) and a large (60S) subunit. The 40S small subunit contains 1 molecule of ribosomal RNA (18S rRNA) and 33 different proteins (encoded by 57 genes). The large 60S subunit contains 3 rRNA molecules (25S, 5.8S and 5S rRNA) and 46 different proteins (encoded by 81 genes).

The protein localises to the cytoplasm. Its function is as follows. Component of the ribosome, a large ribonucleoprotein complex responsible for the synthesis of proteins in the cell. The small ribosomal subunit (SSU) binds messenger RNAs (mRNAs) and translates the encoded message by selecting cognate aminoacyl-transfer RNA (tRNA) molecules. The large subunit (LSU) contains the ribosomal catalytic site termed the peptidyl transferase center (PTC), which catalyzes the formation of peptide bonds, thereby polymerizing the amino acids delivered by tRNAs into a polypeptide chain. The nascent polypeptides leave the ribosome through a tunnel in the LSU and interact with protein factors that function in enzymatic processing, targeting, and the membrane insertion of nascent chains at the exit of the ribosomal tunnel. The polypeptide is Small ribosomal subunit protein eS25A (Saccharomyces cerevisiae (strain ATCC 204508 / S288c) (Baker's yeast)).